The following is a 366-amino-acid chain: MIERTIETATKRYPLLLGDGAARVLPSLLRSLSCPPGTKLFIVTDDTVAPLYLDEVRALLAAAEYDVYAYVIPSGEAAKSFDHYYACQTAALQCGLDRRSVIIALGGGVVGDLAGFVAATYMRGIRYIQMPTTLLAHDSAVGGKVAINHPLGKNMIGAFHQPEAVVYDTSFLRTLPERELRSGFAEVIKHALIRDRRFYDWLRAEIKTLADLRGEKLAYCIEKGIDIKASVVREDEKETGVRAHLNFGHTLGHALESELGYGALTHGEAVAVGMLFAVFVSERFYGRSFAEHRLADWFAGYGFPVSLPTTVQTPRLLEKMKGDKKAYAGTVRMVLLCEIGDVEVVELEDDNLLTWLDEFARQGGKG.

Residues 74 to 79 (SGEAAK), 108 to 112 (GVVGD), 132 to 133 (TT), lysine 144, lysine 153, and 171 to 174 (FLRT) contribute to the NAD(+) site. Zn(2+) is bound by residues glutamate 186, histidine 249, and histidine 266.

The protein belongs to the sugar phosphate cyclases superfamily. Dehydroquinate synthase family. The cofactor is Co(2+). It depends on Zn(2+) as a cofactor. NAD(+) is required as a cofactor.

It localises to the cytoplasm. The catalysed reaction is 7-phospho-2-dehydro-3-deoxy-D-arabino-heptonate = 3-dehydroquinate + phosphate. It functions in the pathway metabolic intermediate biosynthesis; chorismate biosynthesis; chorismate from D-erythrose 4-phosphate and phosphoenolpyruvate: step 2/7. In terms of biological role, catalyzes the conversion of 3-deoxy-D-arabino-heptulosonate 7-phosphate (DAHP) to dehydroquinate (DHQ). This chain is 3-dehydroquinate synthase, found in Geobacillus kaustophilus (strain HTA426).